The chain runs to 183 residues: ATP synthase subunit delta (183 aa).

It belongs to the ATPase delta chain family. As to quaternary structure, F-type ATPases have 2 components, F(1) - the catalytic core - and F(0) - the membrane proton channel. F(1) has five subunits: alpha(3), beta(3), gamma(1), delta(1), epsilon(1). F(0) has three main subunits: a(1), b(2) and c(10-14). The alpha and beta chains form an alternating ring which encloses part of the gamma chain. F(1) is attached to F(0) by a central stalk formed by the gamma and epsilon chains, while a peripheral stalk is formed by the delta and b chains.

It localises to the cell inner membrane. Functionally, f(1)F(0) ATP synthase produces ATP from ADP in the presence of a proton or sodium gradient. F-type ATPases consist of two structural domains, F(1) containing the extramembraneous catalytic core and F(0) containing the membrane proton channel, linked together by a central stalk and a peripheral stalk. During catalysis, ATP synthesis in the catalytic domain of F(1) is coupled via a rotary mechanism of the central stalk subunits to proton translocation. In terms of biological role, this protein is part of the stalk that links CF(0) to CF(1). It either transmits conformational changes from CF(0) to CF(1) or is implicated in proton conduction. This Desulfatibacillum aliphaticivorans protein is ATP synthase subunit delta.